The chain runs to 377 residues: Succinyl-diaminopimelate desuccinylase (377 aa).

Residue histidine 68 participates in Zn(2+) binding. Aspartate 70 is a catalytic residue. Residue aspartate 101 coordinates Zn(2+). The active-site Proton acceptor is the glutamate 135. Glutamate 136, glutamate 164, and histidine 350 together coordinate Zn(2+).

It belongs to the peptidase M20A family. DapE subfamily. In terms of assembly, homodimer. The cofactor is Zn(2+). It depends on Co(2+) as a cofactor.

The enzyme catalyses N-succinyl-(2S,6S)-2,6-diaminopimelate + H2O = (2S,6S)-2,6-diaminopimelate + succinate. It participates in amino-acid biosynthesis; L-lysine biosynthesis via DAP pathway; LL-2,6-diaminopimelate from (S)-tetrahydrodipicolinate (succinylase route): step 3/3. Catalyzes the hydrolysis of N-succinyl-L,L-diaminopimelic acid (SDAP), forming succinate and LL-2,6-diaminopimelate (DAP), an intermediate involved in the bacterial biosynthesis of lysine and meso-diaminopimelic acid, an essential component of bacterial cell walls. The protein is Succinyl-diaminopimelate desuccinylase of Acinetobacter baumannii (strain SDF).